Consider the following 79-residue polypeptide: Ubiquinol-cytochrome c reductase complex assembly factor 5 (79 aa).

Residues 1 to 20 are Mitochondrial matrix-facing; the sequence is MSPYSGSVRRLLDSWPGKKR. The helical transmembrane segment at 21-43 threads the bilayer; sequence FGVYRFLPLFFLLGAGLEFSMIN. The Mitochondrial intermembrane portion of the chain corresponds to 44–79; sequence WTVGETNFYRTFKRRQAKNYVEEQQHLQARAANNTN.

It belongs to the UQCC5 family. In terms of assembly, interacts with respiratory complex III components Uqcc1 and RFeSP; the interactions are probably involved in the assembly and stability of the mitochondrial ubiquinol-cytochrome c reductase complex. Interacts with sloth2; the interaction stabilizes both components. As to expression, expressed in the brain.

The protein localises to the mitochondrion inner membrane. The protein resides in the mitochondrion. Functionally, required for the assembly and stability of the mitochondrial ubiquinol-cytochrome c reductase complex (complex III (CIII) or cytochrome b-c1 complex), a multisubunit transmembrane complex that is part of the mitochondrial electron transport chain (ETC) which drives oxidative phosphorylation. The sequence is that of Ubiquinol-cytochrome c reductase complex assembly factor 5 from Drosophila melanogaster (Fruit fly).